A 260-amino-acid chain; its full sequence is Lipid II isoglutaminyl synthase (glutamine-hydrolyzing) subunit GatD (260 aa).

In terms of domain architecture, GATase cobBQ-type spans 16-214 (QLNIAHLYGN…FHGPILSRNA (199 aa)). Residue cysteine 107 is the Nucleophile of the active site. Arginine 142 lines the substrate pocket. Residue histidine 206 is part of the active site.

This sequence belongs to the CobB/CobQ family. GatD subfamily. Forms a heterodimer with MurT.

The enzyme catalyses beta-D-GlcNAc-(1-&gt;4)-Mur2Ac(oyl-L-Ala-gamma-D-Glu-L-Lys-D-Ala-D-Ala)-di-trans,octa-cis-undecaprenyl diphosphate + L-glutamine + ATP + H2O = beta-D-GlcNAc-(1-&gt;4)-Mur2Ac(oyl-L-Ala-D-isoglutaminyl-L-Lys-D-Ala-D-Ala)-di-trans,octa-cis-undecaprenyl diphosphate + L-glutamate + ADP + phosphate + H(+). The catalysed reaction is L-glutamine + H2O = L-glutamate + NH4(+). The protein operates within cell wall biogenesis; peptidoglycan biosynthesis. Functionally, the lipid II isoglutaminyl synthase complex catalyzes the formation of alpha-D-isoglutamine in the cell wall lipid II stem peptide. The GatD subunit catalyzes the hydrolysis of glutamine to glutamate and ammonia. The resulting ammonia molecule is channeled to the active site of MurT. The polypeptide is Lipid II isoglutaminyl synthase (glutamine-hydrolyzing) subunit GatD (Streptococcus pneumoniae (strain ATCC BAA-255 / R6)).